Here is a 490-residue protein sequence, read N- to C-terminus: Monocarboxylate transporter 3 (490 aa).

Residues 1-14 (MGAGGPRRGAGPPD) are Cytoplasmic-facing. A helical transmembrane segment spans residues 15–35 (GGWGWVVLGACFVITGFAYGF). Residues 36–58 (PKAVSVFFRELKRDFGAGYSDTA) lie on the Extracellular side of the membrane. The helical transmembrane segment at 59–79 (WVSSIMLAMLYGTGPLSSILV) threads the bilayer. Residues 80–85 (TRFGCR) lie on the Cytoplasmic side of the membrane. Residues 86-106 (PVMLAGGLLASAGMILASFAS) form a helical membrane-spanning segment. The Extracellular portion of the chain corresponds to 107 to 115 (RLLELYLTA). Residues 116-136 (GVLTGLGLALNFQPSLIMLGL) traverse the membrane as a helical segment. Topologically, residues 137–147 (YFERRRPLANG) are cytoplasmic. Residues 148 to 168 (LAAAGSPVFLSTLSPLGQLLG) form a helical membrane-spanning segment. At 169–172 (ERFG) the chain is on the extracellular side. A helical membrane pass occupies residues 173 to 193 (WRGGFLLFGGLLLHCCACGAV). Topologically, residues 194–230 (MRPPPGPQPRPDPAPPGGRARHRQLLDLAVCTDRTFM) are cytoplasmic. A helical membrane pass occupies residues 231-251 (VYMVTKFLMALGLFVPAILLV). At 252–257 (NYAKDA) the chain is on the extracellular side. The chain crosses the membrane as a helical span at residues 258–278 (GVPDAEAAFLLSIVGFVDIVA). Over 279–293 (RPACGALAGLGRLRP) the chain is Cytoplasmic. A helical membrane pass occupies residues 294–314 (HVPYLFSLALLANGLTDLISA). Topologically, residues 315–318 (RARS) are extracellular. Residues 319 to 339 (YGTLVAFCIAFGLSYGMVGAL) form a helical membrane-spanning segment. Residues 340–352 (QFEVLMATVGAPR) lie on the Cytoplasmic side of the membrane. A helical transmembrane segment spans residues 353–373 (FPSALGLVLLVEAVAVLIGPP). At 374-386 (SAGRLVDALKNYE) the chain is on the extracellular side. Residues 387 to 407 (IIFYLAGSEVVLAGVFMAVTT) form a helical membrane-spanning segment. Residues 408 to 490 (YCCQRCSKDI…GGHEAHGQNA (83 aa)) are Cytoplasmic-facing. The interval 419–490 (PGPSAEGGTS…GGHEAHGQNA (72 aa)) is disordered. Basolateral sorting signal regions lie at residues 426 to 460 (GTSDTEDVEAERDSEPMPASTEEPGSLEALEVLSP) and 461 to 480 (RAGSPEPEEEAVPDLSHESV). The span at 475-490 (LSHESVGGHEAHGQNA) shows a compositional bias: basic and acidic residues.

This sequence belongs to the major facilitator superfamily. Monocarboxylate porter (TC 2.A.1.13) family. In terms of tissue distribution, retinal pigment epithelium.

It localises to the basolateral cell membrane. The enzyme catalyses (S)-lactate(in) + H(+)(in) = (S)-lactate(out) + H(+)(out). Probable retinal pigment epithelium (RPE)-specific proton-coupled L-lactate transporter. May facilitate transport of lactate and H(+) out of the retina and could therefore play a role in pH and ion homeostasis of the outer retina. This is Monocarboxylate transporter 3 (Slc16a8) from Rattus norvegicus (Rat).